Reading from the N-terminus, the 236-residue chain is Protein-L-isoaspartate O-methyltransferase 1 (236 aa).

Residue Ser86 is part of the active site.

Belongs to the methyltransferase superfamily. L-isoaspartyl/D-aspartyl protein methyltransferase family.

It is found in the cytoplasm. It carries out the reaction [protein]-L-isoaspartate + S-adenosyl-L-methionine = [protein]-L-isoaspartate alpha-methyl ester + S-adenosyl-L-homocysteine. Functionally, catalyzes the methyl esterification of L-isoaspartyl residues in peptides and proteins that result from spontaneous decomposition of normal L-aspartyl and L-asparaginyl residues. It plays a role in the repair and/or degradation of damaged proteins. This is Protein-L-isoaspartate O-methyltransferase 1 from Nitrosospira multiformis (strain ATCC 25196 / NCIMB 11849 / C 71).